The sequence spans 228 residues: Calcyclin-binding protein (228 aa).

The residue at position 2 (A2) is an N-acetylalanine. The segment at 2–80 (ASEELQKDLE…YTVKISNYGW (79 aa)) is interaction with SIAH1. Residue S3 is modified to Phosphoserine. K8 and K19 each carry N6-acetyllysine. At S34 the chain carries Phosphoserine. The CS domain occupies 73–167 (VKISNYGWDQ…VENTRWDYLT (95 aa)). The interval 73 to 228 (VKISNYGWDQ…EKQAKGDTEF (156 aa)) is interaction with SKP1. K85 and K118 each carry N6-acetyllysine. Residues 154-228 (CRKKVENTRW…EKQAKGDTEF (75 aa)) form an interaction with S100A6 region. The 61-residue stretch at 168–228 (QVEKERKEKE…EKQAKGDTEF (61 aa)) folds into the SGS domain.

As to quaternary structure, interacts with protein of the S100 family S100A1, S100A6, S100B, S100P and S100A12 in a calcium-dependent manner. Component of some large E3 complex at least composed of UBE2D1, SIAH1, CACYBP/SIP, SKP1, APC and TBL1X. Interacts directly with SIAH1, SIAH2 and SKP1. Phosphorylated on serine residues. Phosphorylated upon induction by RA or at high calcium concentrations.

Its subcellular location is the cytoplasm. It localises to the nucleus. Functionally, may be involved in calcium-dependent ubiquitination and subsequent proteasomal degradation of target proteins. Probably serves as a molecular bridge in ubiquitin E3 complexes. Participates in the ubiquitin-mediated degradation of beta-catenin (CTNNB1). This is Calcyclin-binding protein (CACYBP) from Pongo abelii (Sumatran orangutan).